Reading from the N-terminus, the 230-residue chain is Uracil-DNA glycosylase (230 aa).

The active-site Proton acceptor is the D71.

It belongs to the uracil-DNA glycosylase (UDG) superfamily. UNG family.

Its subcellular location is the cytoplasm. It catalyses the reaction Hydrolyzes single-stranded DNA or mismatched double-stranded DNA and polynucleotides, releasing free uracil.. In terms of biological role, excises uracil residues from the DNA which can arise as a result of misincorporation of dUMP residues by DNA polymerase or due to deamination of cytosine. This Tropheryma whipplei (strain TW08/27) (Whipple's bacillus) protein is Uracil-DNA glycosylase.